The following is a 255-amino-acid chain: 7alpha-hydroxysteroid dehydrogenase (255 aa).

Residues I23, 42–43 (DI), 68–69 (DI), and N95 contribute to the NAD(+) site. Glycochenodeoxycholate-binding residues include G99, S146, N151, and Y159. NAD(+)-binding positions include Y159, K163, and 192–194 (ILT). Y159 serves as the catalytic Proton acceptor.

The protein belongs to the short-chain dehydrogenases/reductases (SDR) family. In terms of assembly, homotetramer.

The enzyme catalyses cholate + NAD(+) = 3alpha,12alpha-dihydroxy-7-oxo-5beta-cholanate + NADH + H(+). It catalyses the reaction chenodeoxycholate + NAD(+) = 7-oxolithocholate + NADH + H(+). It carries out the reaction taurochenodeoxycholate + NAD(+) = 7-oxotaurolithocholate + NADH + H(+). The catalysed reaction is taurocholate + NAD(+) = 7-oxo-taurodeoxycholate + NADH + H(+). The enzyme catalyses glycocholate + NAD(+) = 7-oxo-glycodeoxycholate + NADH + H(+). It catalyses the reaction glycochenodeoxycholate + NAD(+) = 7-oxoglycolithocholate + NADH + H(+). 7alpha-hydroxysteroid dehydrogenase involved in the metabolism of bile acids. Catalyzes the NAD(+)-dependent oxidation of the 7alpha-hydroxy group of 7alpha-hydroxysteroids, such as the major human bile acids cholate and chenodeoxycholate, to the corresponding 7-oxosteroids. To a lesser extent, can also act on taurochenodeoxycholate, taurocholate and glycocholate. Can also use glycochenodeoxycholate as substrate. Is not able to use NADP(+) instead of NAD(+) as the electron acceptor. In Escherichia coli O157:H7, this protein is 7alpha-hydroxysteroid dehydrogenase (hdhA).